The sequence spans 340 residues: Protein FAM50A-A (340 aa).

Disordered regions lie at residues 1–22 (MAQY…KKRE) and 123–178 (NLEE…EEEN). A compositionally biased stretch (acidic residues) spans 124–146 (LEEDEECEDEEGEEEESDKEDPP). A compositionally biased stretch (basic and acidic residues) spans 169-178 (PDRDREEEEN).

The protein resides in the nucleus. Probably involved in the regulation of pre-mRNA splicing. The chain is Protein FAM50A-A (fam50a-a) from Xenopus laevis (African clawed frog).